The chain runs to 315 residues: Mannose-6-phosphate isomerase ManA (315 aa).

Residues His-97, Glu-115, and His-172 each coordinate Zn(2+). Arg-192 is a catalytic residue.

Belongs to the mannose-6-phosphate isomerase type 1 family. It depends on Zn(2+) as a cofactor.

It carries out the reaction D-mannose 6-phosphate = D-fructose 6-phosphate. The chain is Mannose-6-phosphate isomerase ManA (manA) from Bacillus subtilis (strain 168).